The primary structure comprises 138 residues: Large ribosomal subunit protein uL16 (138 aa).

Positions 1-16 are enriched in basic residues; that stretch reads MLIPRRVKHRKQHHPG. Residues 1 to 25 form a disordered region; sequence MLIPRRVKHRKQHHPGRSGAATGGT.

It belongs to the universal ribosomal protein uL16 family. As to quaternary structure, part of the 50S ribosomal subunit.

In terms of biological role, binds 23S rRNA and is also seen to make contacts with the A and possibly P site tRNAs. The sequence is that of Large ribosomal subunit protein uL16 from Pseudarthrobacter chlorophenolicus (strain ATCC 700700 / DSM 12829 / CIP 107037 / JCM 12360 / KCTC 9906 / NCIMB 13794 / A6) (Arthrobacter chlorophenolicus).